We begin with the raw amino-acid sequence, 176 residues long: MEERLILVDTDDRPIGICEKMRAHHEGLLHRAFSIFVFDSAGRLLLQQRALNKYHSGGLWSNTCCGHPRPREALPDAVRRRLGEEMGFACELRPVDALVYRARFENDLIEHEFVHIHVGRFDGTVAPDFAEVAAWRWIDVPTLLEWMADEPSAFTVWFHCMIERAGLPVLHRWAHR.

2 residues coordinate Mn(2+): His24 and His30. Residues 28–160 (LLHRAFSIFV…PSAFTVWFHC (133 aa)) enclose the Nudix hydrolase domain. Cys65 is a catalytic residue. His67 lines the Mn(2+) pocket. Glu85 serves as a coordination point for Mg(2+). Mn(2+) contacts are provided by Glu110 and Glu112. The active site involves Glu112.

This sequence belongs to the IPP isomerase type 1 family. Requires Mg(2+) as cofactor. The cofactor is Mn(2+).

It localises to the cytoplasm. The enzyme catalyses isopentenyl diphosphate = dimethylallyl diphosphate. The protein operates within isoprenoid biosynthesis; dimethylallyl diphosphate biosynthesis; dimethylallyl diphosphate from isopentenyl diphosphate: step 1/1. Functionally, catalyzes the 1,3-allylic rearrangement of the homoallylic substrate isopentenyl (IPP) to its highly electrophilic allylic isomer, dimethylallyl diphosphate (DMAPP). The sequence is that of Isopentenyl-diphosphate Delta-isomerase from Burkholderia multivorans (strain ATCC 17616 / 249).